The primary structure comprises 331 residues: Hyaluronidase (331 aa).

Cystine bridges form between Cys-19-Cys-308 and Cys-185-Cys-197. Asn-79 carries an N-linked (GlcNAc...) asparagine glycan. The active-site Proton donor is the Glu-109. Asn-325 is a glycosylation site (N-linked (GlcNAc...) asparagine).

It belongs to the glycosyl hydrolase 56 family. In terms of tissue distribution, expressed by the venom gland.

The protein resides in the secreted. The catalysed reaction is Random hydrolysis of (1-&gt;4)-linkages between N-acetyl-beta-D-glucosamine and D-glucuronate residues in hyaluronate.. In terms of biological role, hydrolyzes high molecular weight hyaluronic acid to produce small oligosaccharides. This is Hyaluronidase from Dolichovespula maculata (Bald-faced hornet).